We begin with the raw amino-acid sequence, 950 residues long: Protocadherin alpha-13 (950 aa).

The first 29 residues, 1 to 29 (MLSSWQGGPRPRQLLLWLLILAAWETGSG), serve as a signal peptide directing secretion. The Extracellular segment spans residues 30-697 (QLHYSVPEEA…GPEAALVDVN (668 aa)). Cadherin domains follow at residues 34–133 (SVPE…PPIF), 134–242 (PESK…APEF), 243–350 (YQSV…APEV), 351–455 (TITS…APAF), 456–565 (AQPE…APAL), and 581–678 (MPRS…APQA). Residues asparagine 257 and asparagine 265 are each glycosylated (N-linked (GlcNAc...) asparagine). An N-linked (GlcNAc...) asparagine glycan is attached at asparagine 548. The helical transmembrane segment at 698-718 (VYLIIAICAVSSLLVLTLLLY) threads the bilayer. Topologically, residues 719 to 950 (TALRCSAPPT…GNSTTDNSDQ (232 aa)) are cytoplasmic. PXXP repeat units follow at residues 734 to 737 (PGKP), 774 to 777 (PSLP), 799 to 802 (PRQP), 832 to 835 (PGGP), 873 to 876 (PGNP), and 891 to 894 (PGSP). Positions 734–894 (PGKPTLVCSS…PDKFIIPGSP (161 aa)) are 6 X 4 AA repeats of P-X-X-P. Disordered stretches follow at residues 774-808 (PSLP…DWRY) and 827-950 (ILRA…NSDQ). Residues 787-800 (GQREEDSEGLKEPR) are compositionally biased toward basic and acidic residues. Over residues 909–923 (DKSDFITFGKKEETK) the composition is skewed to basic and acidic residues.

The protein localises to the cell membrane. Functionally, potential calcium-dependent cell-adhesion protein. May be involved in the establishment and maintenance of specific neuronal connections in the brain. The protein is Protocadherin alpha-13 (PCDHA13) of Pan troglodytes (Chimpanzee).